Consider the following 273-residue polypeptide: 2,3,4,5-tetrahydropyridine-2,6-dicarboxylate N-succinyltransferase (273 aa).

Arginine 104 and aspartate 141 together coordinate substrate.

Belongs to the transferase hexapeptide repeat family. As to quaternary structure, homotrimer.

Its subcellular location is the cytoplasm. The enzyme catalyses (S)-2,3,4,5-tetrahydrodipicolinate + succinyl-CoA + H2O = (S)-2-succinylamino-6-oxoheptanedioate + CoA. Its pathway is amino-acid biosynthesis; L-lysine biosynthesis via DAP pathway; LL-2,6-diaminopimelate from (S)-tetrahydrodipicolinate (succinylase route): step 1/3. The protein is 2,3,4,5-tetrahydropyridine-2,6-dicarboxylate N-succinyltransferase of Nitrosomonas europaea (strain ATCC 19718 / CIP 103999 / KCTC 2705 / NBRC 14298).